Reading from the N-terminus, the 509-residue chain is MSLDVNASEVLRIIKEKIKDFDQQIFSEEIGEVISVKDGVVIACGLENAEFNEKVVFPNGEIGLIQSIEYDHVGIVILTNTQDIKEGDTVRRTKEALRIPVGKKLLGRVIDPLGNPLDGAGQIFADAYSPIEVKAPGILDRQSVKEPLQTGIKVIDLLIPIGRGQRELIIGDRQTGKTTIALDSIINQRDINKNLPDEKKLYCVYVAIGQKCSTVARIMKTLQEQGAMDYTTIVLAGASDSAQSQFLAPYAGCSIGEYFRDNGMHCLIVYDDLSKHAVAYRQMSLLLRRPPGREAYPGDVFYIHSRLLERAAKMSDKHGAGSLTALPIIETQAGDVSAYIPTNVISITDGQIFLETELFNKGVKPAVNVGLSVSRVGSAAQIKAIKQVARSIKLELAQYREMEAFAQFGADLDETTQALLEKGKKLTELLKQNQHETLPVEEQVVLMFAANEGYFDNIDVTGISTAAKNLLGSFRLYHRDLLEDIKEKSIIGDLASLSSALQGCKTTNA.

Position 171–178 (171–178) interacts with ATP; it reads GDRQTGKT.

The protein belongs to the ATPase alpha/beta chains family. In terms of assembly, F-type ATPases have 2 components, CF(1) - the catalytic core - and CF(0) - the membrane proton channel. CF(1) has five subunits: alpha(3), beta(3), gamma(1), delta(1), epsilon(1). CF(0) has three main subunits: a(1), b(2) and c(9-12). The alpha and beta chains form an alternating ring which encloses part of the gamma chain. CF(1) is attached to CF(0) by a central stalk formed by the gamma and epsilon chains, while a peripheral stalk is formed by the delta and b chains.

The protein localises to the cell inner membrane. It carries out the reaction ATP + H2O + 4 H(+)(in) = ADP + phosphate + 5 H(+)(out). Its function is as follows. Produces ATP from ADP in the presence of a proton gradient across the membrane. The alpha chain is a regulatory subunit. The chain is ATP synthase subunit alpha from Neorickettsia sennetsu (strain ATCC VR-367 / Miyayama) (Ehrlichia sennetsu).